A 29-amino-acid chain; its full sequence is Galanin (29 aa).

Alanine amide is present on Ala-29.

The protein belongs to the galanin family.

The protein resides in the secreted. Contracts smooth muscle of the gastrointestinal and genitourinary tract, regulates growth hormone release, modulates insulin release, and may be involved in the control of adrenal secretion. This Alligator mississippiensis (American alligator) protein is Galanin (GAL).